The sequence spans 273 residues: Putative phosphoenolpyruvate synthase regulatory protein (273 aa).

ADP is bound at residue 153–160; the sequence is GVSRCGKT.

It belongs to the pyruvate, phosphate/water dikinase regulatory protein family. PSRP subfamily.

The enzyme catalyses [pyruvate, water dikinase] + ADP = [pyruvate, water dikinase]-phosphate + AMP + H(+). The catalysed reaction is [pyruvate, water dikinase]-phosphate + phosphate + H(+) = [pyruvate, water dikinase] + diphosphate. Functionally, bifunctional serine/threonine kinase and phosphorylase involved in the regulation of the phosphoenolpyruvate synthase (PEPS) by catalyzing its phosphorylation/dephosphorylation. This chain is Putative phosphoenolpyruvate synthase regulatory protein, found in Yersinia pseudotuberculosis serotype I (strain IP32953).